A 491-amino-acid chain; its full sequence is Eupatolide synthase (491 aa).

Residues leucine 7–tryptophan 27 form a helical; Signal-anchor for type II membrane protein membrane-spanning segment. Cysteine 430 contributes to the heme binding site.

The protein belongs to the cytochrome P450 family. Heme serves as cofactor. As to expression, expressed in leaf primordia.

It localises to the membrane. It carries out the reaction 8beta-hydroxygermacra-1(10),4,11(13)-trien-12-oate + reduced [NADPH--hemoprotein reductase] + O2 = eupatolide + oxidized [NADPH--hemoprotein reductase] + 2 H2O. It functions in the pathway secondary metabolite biosynthesis; terpenoid biosynthesis. In terms of biological role, involved in the biosynthesis of germacrene-derived sesquiterpene lactones. Hydroxylates 8-beta-hydroxy-germacrene A acid to 6-alpha,8-beta-hydroxy-germacrene A acid, which, in turn, undergo spontaneous lactonization to become eupatolide. This chain is Eupatolide synthase, found in Helianthus annuus (Common sunflower).